Consider the following 625-residue polypeptide: tRNA uridine 5-carboxymethylaminomethyl modification enzyme MnmG (625 aa).

14 to 19 (GAGHAG) provides a ligand contact to FAD. Residue 273–287 (GPRYCPSIEDKIVRF) coordinates NAD(+).

This sequence belongs to the MnmG family. Homodimer. Heterotetramer of two MnmE and two MnmG subunits. FAD serves as cofactor.

It localises to the cytoplasm. NAD-binding protein involved in the addition of a carboxymethylaminomethyl (cmnm) group at the wobble position (U34) of certain tRNAs, forming tRNA-cmnm(5)s(2)U34. In Clostridium botulinum (strain Hall / ATCC 3502 / NCTC 13319 / Type A), this protein is tRNA uridine 5-carboxymethylaminomethyl modification enzyme MnmG.